Here is a 301-residue protein sequence, read N- to C-terminus: B3 domain-containing protein At5g18090 (301 aa).

Positions 18–113 (FFKILRSADL…CFTVDIYQID (96 aa)) form a DNA-binding region, TF-B3 1. Disordered regions lie at residues 123 to 142 (SATIASSSGRNKREQRNNIY) and 153 to 194 (SWSE…KMKV). Basic and acidic residues predominate over residues 133 to 142 (NKREQRNNIY). Positions 209–301 (VPEFTLTIKK…PTEMLVRVSK (93 aa)) form a DNA-binding region, TF-B3 2.

The protein resides in the nucleus. The protein is B3 domain-containing protein At5g18090 of Arabidopsis thaliana (Mouse-ear cress).